We begin with the raw amino-acid sequence, 524 residues long: tRNA-2-methylthio-N(6)-dimethylallyladenosine synthase (524 aa).

Over residues 1–12 (MNTHPSHPDHPA) the composition is skewed to basic and acidic residues. Positions 1–23 (MNTHPSHPDHPADTLPARGNREG) are disordered. The MTTase N-terminal domain occupies 27 to 143 (RTYEVRTFGC…LPTLLNRAEH (117 aa)). [4Fe-4S] cluster-binding residues include C36, C72, C106, C180, C184, and C187. A Radical SAM core domain is found at 166–402 (RESAYAGWVS…MALQERICEE (237 aa)). A TRAM domain is found at 405–476 (QKFIGQTVEL…PFFLIADAGV (72 aa)).

It belongs to the methylthiotransferase family. MiaB subfamily. As to quaternary structure, monomer. The cofactor is [4Fe-4S] cluster.

It is found in the cytoplasm. The enzyme catalyses N(6)-dimethylallyladenosine(37) in tRNA + (sulfur carrier)-SH + AH2 + 2 S-adenosyl-L-methionine = 2-methylsulfanyl-N(6)-dimethylallyladenosine(37) in tRNA + (sulfur carrier)-H + 5'-deoxyadenosine + L-methionine + A + S-adenosyl-L-homocysteine + 2 H(+). Functionally, catalyzes the methylthiolation of N6-(dimethylallyl)adenosine (i(6)A), leading to the formation of 2-methylthio-N6-(dimethylallyl)adenosine (ms(2)i(6)A) at position 37 in tRNAs that read codons beginning with uridine. The chain is tRNA-2-methylthio-N(6)-dimethylallyladenosine synthase from Corynebacterium efficiens (strain DSM 44549 / YS-314 / AJ 12310 / JCM 11189 / NBRC 100395).